A 248-amino-acid chain; its full sequence is Small ribosomal subunit protein uS2 (248 aa).

Belongs to the universal ribosomal protein uS2 family.

The polypeptide is Small ribosomal subunit protein uS2 (Thiobacillus denitrificans (strain ATCC 25259 / T1)).